A 510-amino-acid polypeptide reads, in one-letter code: DAP3-binding cell death enhancer 1 (510 aa).

The transit peptide at methionine 1–isoleucine 23 directs the protein to the mitochondrion. 2 disordered regions span residues glycine 19–proline 61 and valine 142–leucine 185. Residues threonine 24–glutamine 101 constitute a propeptide, extended MTS. The segment covering threonine 35–leucine 45 has biased composition (low complexity). 2 stretches are compositionally biased toward basic and acidic residues: residues serine 46 to proline 61 and glycine 155 to proline 167. Over residues alanine 169 to arginine 181 the composition is skewed to polar residues. TPR repeat units follow at residues alanine 213 to valine 245, alanine 246 to serine 278, lysine 279 to histidine 313, serine 314 to leucine 351, threonine 352 to aspartate 385, serine 386 to proline 423, and alanine 471 to serine 499. Positions leucine 307–glutamine 326 match the SIFI-degron motif.

It belongs to the DELE1 family. As to quaternary structure, interacts with DAP3. In terms of assembly, interacts (via TPR repeats) with EIF2AK1/HRI; activating the protein kinase activity of EIF2AK1/HRI, thereby promoting the integrated stress response (ISR). Homooctamer; oligomerization is required to activate EIF2AK1/HRI. Interacts (via TPR repeats) with EIF2AK1/HRI; activating the protein kinase activity of EIF2AK1/HRI, thereby promoting the integrated stress response (ISR). In terms of processing, unstable protein in absence of stress: imported in the mitochondrial matrix following processing by the mitochondrial-processing peptidase (MPP), where it is degraded by LONP1. Stabilized in response to iron deficiency: iron deficiency impairs mitochondrial import, promoting localization at the mitochondrial surface and stabilization. Cleaved by OMA1 in response to mitochondrial stress, generating the DAP3-binding cell death enhancer 1 short form (DELE1(S) or S-DELE1) that accumulates in the cytosol and activates the protein kinase activity of EIF2AK1/HRI. Protein cleavage by OMA1 can take place at different positions, and apparently does not require a specific sequence motif. Post-translationally, ubiquitinated and degraded by the SIFI complex once the mitochondrial stress has been resolved, thereby providing stress response silencing. Within the SIFI complex, UBR4 initiates ubiquitin chain that are further elongated or branched by KCMF1.

It is found in the mitochondrion. The protein localises to the mitochondrion outer membrane. Its subcellular location is the mitochondrion inner membrane. The protein resides in the cytoplasm. It localises to the cytosol. In terms of biological role, protein kinase activator that acts as a key activator of the integrated stress response (ISR) following various stresses, such as iron deficiency, mitochondrial stress or mitochondrial DNA breaks. Detects impaired protein import and processing in mitochondria, activating the ISR. May also required for the induction of death receptor-mediated apoptosis through the regulation of caspase activation. Functionally, protein kinase activator that activates the ISR in response to iron deficiency: iron deficiency impairs mitochondrial import, promoting DELE1 localization at the mitochondrial surface, where it binds and activates EIF2AK1/HRI to trigger the ISR. Protein kinase activator generated by protein cleavage in response to mitochondrial stress, which accumulates in the cytosol and specifically binds to and activates the protein kinase activity of EIF2AK1/HRI. It thereby activates the integrated stress response (ISR): EIF2AK1/HRI activation promotes eIF-2-alpha (EIF2S1) phosphorylation, leading to a decrease in global protein synthesis and the induction of selected genes, including the transcription factor ATF4, the master transcriptional regulator of the ISR. Also acts as an activator of PRKN-independent mitophagy: activates the protein kinase activity of EIF2AK1/HRI in response to mitochondrial damage, promoting eIF-2-alpha (EIF2S1) phosphorylation, leading to mitochondrial localization of EIF2S1 followed by induction of mitophagy. The polypeptide is DAP3-binding cell death enhancer 1 (Mus musculus (Mouse)).